The sequence spans 436 residues: Chromosomal replication initiator protein DnaA (436 aa).

Residues 1–80 (MSHEAVWQHV…QAPRFELRVV (80 aa)) are domain I, interacts with DnaA modulators. The tract at residues 80–100 (VPGVVVQEDIFQAAPAEAPRP) is domain II. Residues 101-317 (KLNPKYTFEN…GALMRAIAFA (217 aa)) form a domain III, AAA+ region region. Positions 145, 147, 148, and 149 each coordinate ATP. A domain IV, binds dsDNA region spans residues 318–436 (SLNGVELTRA…LLRTLREACT (119 aa)).

Belongs to the DnaA family. In terms of assembly, oligomerizes as a right-handed, spiral filament on DNA at oriC.

The protein localises to the cytoplasm. Its function is as follows. Plays an essential role in the initiation and regulation of chromosomal replication. ATP-DnaA binds to the origin of replication (oriC) to initiate formation of the DNA replication initiation complex once per cell cycle. Binds the DnaA box (a 9 base pair repeat at the origin) and separates the double-stranded (ds)DNA. Forms a right-handed helical filament on oriC DNA; dsDNA binds to the exterior of the filament while single-stranded (ss)DNA is stabiized in the filament's interior. The ATP-DnaA-oriC complex binds and stabilizes one strand of the AT-rich DNA unwinding element (DUE), permitting loading of DNA polymerase. After initiation quickly degrades to an ADP-DnaA complex that is not apt for DNA replication. Binds acidic phospholipids. This is Chromosomal replication initiator protein DnaA from Thermus thermophilus (strain ATCC BAA-163 / DSM 7039 / HB27).